A 346-amino-acid polypeptide reads, in one-letter code: tRNA N6-adenosine threonylcarbamoyltransferase (346 aa).

The a divalent metal cation site is built by H117, H121, and Y138. Substrate-binding positions include 138-142, D170, G185, and N277; that span reads YVSGG. D305 lines the a divalent metal cation pocket.

The protein belongs to the KAE1 / TsaD family. In terms of assembly, component of the EKC/KEOPS complex composed of at least SPAP27G11.07c/BUD32, cgi121, gon7, pgp2 and SPAC4H3.13/PCC1; the whole complex dimerizes. A divalent metal cation is required as a cofactor.

The protein localises to the cytoplasm. The protein resides in the nucleus. The catalysed reaction is L-threonylcarbamoyladenylate + adenosine(37) in tRNA = N(6)-L-threonylcarbamoyladenosine(37) in tRNA + AMP + H(+). In terms of biological role, component of the EKC/KEOPS complex that is required for the formation of a threonylcarbamoyl group on adenosine at position 37 (t(6)A37) in tRNAs that read codons beginning with adenine. The complex is probably involved in the transfer of the threonylcarbamoyl moiety of threonylcarbamoyl-AMP (TC-AMP) to the N6 group of A37. Pgp2 likely plays a direct catalytic role in this reaction, but requires other protein(s) of the complex to fulfill this activity. The EKC/KEOPS complex also promotes both telomere uncapping and telomere elongation. The complex is required for efficient recruitment of transcriptional coactivators. In Schizosaccharomyces pombe (strain 972 / ATCC 24843) (Fission yeast), this protein is tRNA N6-adenosine threonylcarbamoyltransferase (pgp2).